Consider the following 100-residue polypeptide: Urease subunit gamma (100 aa).

Belongs to the urease gamma subunit family. As to quaternary structure, heterotrimer of UreA (gamma), UreB (beta) and UreC (alpha) subunits. Three heterotrimers associate to form the active enzyme.

The protein localises to the cytoplasm. It carries out the reaction urea + 2 H2O + H(+) = hydrogencarbonate + 2 NH4(+). It participates in nitrogen metabolism; urea degradation; CO(2) and NH(3) from urea (urease route): step 1/1. The polypeptide is Urease subunit gamma (Thermosynechococcus vestitus (strain NIES-2133 / IAM M-273 / BP-1)).